A 110-amino-acid chain; its full sequence is uncharacterized protein (110 aa).

This sequence to M.jannaschii MJ0123 and MJ1213.

This is an uncharacterized protein from Aquifex aeolicus (strain VF5).